Here is a 70-residue protein sequence, read N- to C-terminus: ATP synthase subunit c (70 aa).

2 consecutive transmembrane segments (helical) span residues 4–24 and 47–67; these read IAAA…NGLI and FIGI…SFIV.

It belongs to the ATPase C chain family. In terms of assembly, F-type ATPases have 2 components, F(1) - the catalytic core - and F(0) - the membrane proton channel. F(1) has five subunits: alpha(3), beta(3), gamma(1), delta(1), epsilon(1). F(0) has three main subunits: a(1), b(2) and c(10-14). The alpha and beta chains form an alternating ring which encloses part of the gamma chain. F(1) is attached to F(0) by a central stalk formed by the gamma and epsilon chains, while a peripheral stalk is formed by the delta and b chains.

The protein localises to the cell membrane. Its function is as follows. F(1)F(0) ATP synthase produces ATP from ADP in the presence of a proton or sodium gradient. F-type ATPases consist of two structural domains, F(1) containing the extramembraneous catalytic core and F(0) containing the membrane proton channel, linked together by a central stalk and a peripheral stalk. During catalysis, ATP synthesis in the catalytic domain of F(1) is coupled via a rotary mechanism of the central stalk subunits to proton translocation. Key component of the F(0) channel; it plays a direct role in translocation across the membrane. A homomeric c-ring of between 10-14 subunits forms the central stalk rotor element with the F(1) delta and epsilon subunits. The sequence is that of ATP synthase subunit c from Staphylococcus carnosus (strain TM300).